The following is a 251-amino-acid chain: MLTFLSNLNNMIIMNDVPTPYGVYFQDSATPNQEGILELHDNIMFYLLVILGLVSWLLFTITRTYSKNPIAYKYIKHGQTIEIIWTIFPAVVLLIIAFPSFILLYLCDEVISPAMTIKAIGLQWYWKYEYSDFINESGETVEFESYVIPEDLLEDGQLRLLDTDTSVVVPVDTHIRFVVTAADVIHDFAIPSLGIKVDATPGRLNQVSALIQREGVFYGQCSELCGTAHSAMPIKIEAVSLPSFLEWLNEQ.

Residues 1–15 (MLTFLSNLNNMIIMN) form the signal peptide. Topologically, residues 16-42 (DVPTPYGVYFQDSATPNQEGILELHDN) are mitochondrial intermembrane. Residues 43 to 64 (IMFYLLVILGLVSWLLFTITRT) traverse the membrane as a helical segment. The Mitochondrial matrix segment spans residues 65 to 82 (YSKNPIAYKYIKHGQTIE). A helical membrane pass occupies residues 83 to 107 (IIWTIFPAVVLLIIAFPSFILLYLC). Over 108 to 251 (DEVISPAMTI…PSFLEWLNEQ (144 aa)) the chain is Mitochondrial intermembrane. Cu cation is bound by residues His-186, Cys-221, Glu-223, Cys-225, His-229, and Met-232. A Mg(2+)-binding site is contributed by Glu-223.

It belongs to the cytochrome c oxidase subunit 2 family. As to quaternary structure, component of the cytochrome c oxidase (complex IV, CIV), a multisubunit enzyme composed of a catalytic core of 3 subunits and several supernumerary subunits. The complex exists as a monomer or a dimer and forms supercomplexes (SCs) in the inner mitochondrial membrane with ubiquinol-cytochrome c oxidoreductase (cytochrome b-c1 complex, complex III, CIII). Cu cation is required as a cofactor. In terms of processing, the signal sequence of COX2 is processed by IMP1.

Its subcellular location is the mitochondrion inner membrane. It carries out the reaction 4 Fe(II)-[cytochrome c] + O2 + 8 H(+)(in) = 4 Fe(III)-[cytochrome c] + 2 H2O + 4 H(+)(out). Functionally, component of the cytochrome c oxidase, the last enzyme in the mitochondrial electron transport chain which drives oxidative phosphorylation. The respiratory chain contains 3 multisubunit complexes succinate dehydrogenase (complex II, CII), ubiquinol-cytochrome c oxidoreductase (cytochrome b-c1 complex, complex III, CIII) and cytochrome c oxidase (complex IV, CIV), that cooperate to transfer electrons derived from NADH and succinate to molecular oxygen, creating an electrochemical gradient over the inner membrane that drives transmembrane transport and the ATP synthase. Cytochrome c oxidase is the component of the respiratory chain that catalyzes the reduction of oxygen to water. Electrons originating from reduced cytochrome c in the intermembrane space (IMS) are transferred via the dinuclear copper A center (CU(A)) of subunit 2 and heme A of subunit 1 to the active site in subunit 1, a binuclear center (BNC) formed by heme A3 and copper B (CU(B)). The BNC reduces molecular oxygen to 2 water molecules using 4 electrons from cytochrome c in the IMS and 4 protons from the mitochondrial matrix. The protein is Cytochrome c oxidase subunit 2 (COX2) of Lachancea kluyveri (strain ATCC 58438 / CBS 3082 / BCRC 21498 / NBRC 1685 / JCM 7257 / NCYC 543 / NRRL Y-12651) (Yeast).